A 436-amino-acid chain; its full sequence is Drebrin-like protein (436 aa).

In terms of domain architecture, ADF-H spans 2–133 (AVNLSRNGPA…EPECIMEKVA (132 aa)). At threonine 26 the chain carries Phosphothreonine. Phosphoserine is present on serine 160. Lysine 176 is modified (N6-acetyllysine). The stretch at 178–232 (NFWAKAEKEEENRRLEEKRRAEEEKQRLEEERRERELQEAARREQRYQEQHRSAG) forms a coiled coil. Basic and acidic residues-rich tracts occupy residues 185–229 (KEEE…EQHR) and 264–275 (HPREIFKQKERA). Positions 185 to 371 (KEEENRRLEE…GSGHIDNYMQ (187 aa)) are disordered. Polar residues predominate over residues 276-286 (MSTTSVSSSQP). A phosphoserine mark is found at serine 277, serine 280, serine 283, and serine 291. Lysine 296 carries the N6-acetyllysine modification. A Phosphothreonine modification is found at threonine 299. Residue serine 311 is modified to Phosphoserine. 2 positions are modified to phosphotyrosine: tyrosine 340 and tyrosine 350. An SH3 domain is found at 377 to 436 (GQGLCARALYDYQAADDTEISFDPENLITGIEVIDEGWWRGYGPDGHFGMFPANYVELIE).

Belongs to the ABP1 family. Interacts with FGD1, MAP4K1 and PRAM1. Interacts with ANKRD54. Interacts with WASL and WIPF1. Interacts with SHANK2 and SHANK3. Interacts with both COBL and PACSIN1. Interacts with DNM1 and SYN1. In terms of tissue distribution, detected in brain (at protein level). Widely expressed in brain with highest levels in hippocampus and cerebral cortex. Located primarily in dendrites and, in moderate amounts, in cell bodies. Isoform 1 and isoform 3 are the predominant isoforms in brain.

The protein resides in the cytoplasm. It is found in the cytoskeleton. The protein localises to the cell projection. It localises to the lamellipodium. Its subcellular location is the ruffle. The protein resides in the cell cortex. It is found in the cytosol. The protein localises to the cell membrane. It localises to the synapse. Its subcellular location is the perikaryon. The protein resides in the neuron projection. It is found in the dendrite. The protein localises to the postsynaptic density. It localises to the golgi apparatus membrane. Its subcellular location is the cytoplasmic vesicle. The protein resides in the clathrin-coated vesicle membrane. It is found in the podosome. The protein localises to the early endosome. Adapter protein that binds F-actin and DNM1, and thereby plays a role in receptor-mediated endocytosis. Required for the formation of organized podosome rosettes. May act as a common effector of antigen receptor-signaling pathways in leukocytes. Acts as a key component of the immunological synapse that regulates T-cell activation by bridging TCRs and the actin cytoskeleton to gene activation and endocytic processes. Plays a role in the reorganization of the actin cytoskeleton, formation of cell projections, such as neurites, in neuron morphogenesis and synapse formation via its interaction with WASL and COBL. Does not bind G-actin and promote actin polymerization by itself. This chain is Drebrin-like protein, found in Rattus norvegicus (Rat).